Consider the following 589-residue polypeptide: Transmembrane 9 superfamily member 3 (589 aa).

Positions 1 to 28 (MRPLPGALGVAAAAALWLLLLLLPRTRA) are cleaved as a signal peptide. N-linked (GlcNAc...) asparagine glycosylation is present at asparagine 174. Helical transmembrane passes span 224-244 (FSIF…SMIL), 294-314 (LIGS…VAMI), 328-348 (AIFV…SLYA), 360-380 (FIGA…INFI), and 389-409 (AIPF…ILPL). Asparagine 419 is a glycosylation site (N-linked (GlcNAc...) asparagine). 4 helical membrane-spanning segments follow: residues 449-469 (IVCL…YFIF), 482-502 (GFMM…TIVC), 519-539 (FLSA…YYFF), and 551-571 (FYFG…GAIG).

It belongs to the nonaspanin (TM9SF) (TC 9.A.2) family.

The protein localises to the membrane. This Homo sapiens (Human) protein is Transmembrane 9 superfamily member 3 (TM9SF3).